The following is a 299-amino-acid chain: Delta-9 desaturase-like 2 protein (299 aa).

The helical transmembrane segment at 55–75 (WEAFRFGIILAILTNLCITFS) threads the bilayer. Residues 77–82 (HRNLTH) carry the Histidine box-1 motif. The Histidine box-2 signature appears at 114 to 118 (HRFHH). The chain crosses the membrane as a helical span at residues 174–194 (LVLHILAFWTLIYLWGGLPYL). A Histidine box-3 motif is present at residues 246-250 (HNNHH). A helical transmembrane segment spans residues 262–282 (WYQLDITWYLIWFFQALGLAT).

Belongs to the fatty acid desaturase type 1 family. Fe cation is required as a cofactor.

It is found in the endoplasmic reticulum membrane. The protein operates within lipid metabolism; polyunsaturated fatty acid biosynthesis. This chain is Delta-9 desaturase-like 2 protein, found in Arabidopsis thaliana (Mouse-ear cress).